Reading from the N-terminus, the 408-residue chain is Peptidase T (408 aa).

Histidine 78 is a binding site for Zn(2+). The active site involves aspartate 80. A Zn(2+)-binding site is contributed by aspartate 140. Glutamate 173 (proton acceptor) is an active-site residue. Residues glutamate 174, aspartate 196, and histidine 379 each contribute to the Zn(2+) site.

Belongs to the peptidase M20B family. Zn(2+) serves as cofactor.

It localises to the cytoplasm. It catalyses the reaction Release of the N-terminal residue from a tripeptide.. Cleaves the N-terminal amino acid of tripeptides. The sequence is that of Peptidase T from Escherichia coli O6:K15:H31 (strain 536 / UPEC).